Reading from the N-terminus, the 441-residue chain is MSKPIVAVVGRPNVGKSTLFNSLCGQQISIVKDTPGVTRDRIYAEVSWLNHNFTLIDTGGIEPDTGDIILSQMREQAEIAIETADVIIFMTDVKQGLVDSDSKVADMLRRSHKPVILVVNKVDSFEKMMPDVYEFYNLGIGEPFPISAVNKLGFGEVLDEVVSHFPEGSDTDKEDDRPKVAIIGKPNVGKSSIINKLVGKNRVIVSDIAGTTRDAIDTAIKYNGKEYVFIDTAGLRRKSKIKEDLERFSIIRTVAAVERADIAILVIDATEGVTEQDAKIAGIAHERGKGIIIAVNKWDDIEKNDKTIYEFTNKIKDTLAFMSYAEIIFVSAKTGQRLNKIYELVDHIVDAQTMRIPTGVLNEILTEAVAMKQPPSDKGKRLKIYYMTQVSVKPPTFVMFVNDVALTHFSYTRYIENRIRESFGFRGTSIRFINRERKEKE.

EngA-type G domains lie at 4–169 (PIVA…PEGS) and 178–353 (PKVA…DAQT). GTP is bound by residues 10-17 (GRPNVGKS), 57-61 (DTGGI), 120-123 (NKVD), 184-191 (GKPNVGKS), 231-235 (DTAGL), and 296-299 (NKWD). Residues 354–438 (MRIPTGVLNE…SIRFINRERK (85 aa)) form the KH-like domain.

This sequence belongs to the TRAFAC class TrmE-Era-EngA-EngB-Septin-like GTPase superfamily. EngA (Der) GTPase family. In terms of assembly, associates with the 50S ribosomal subunit.

In terms of biological role, GTPase that plays an essential role in the late steps of ribosome biogenesis. This Lachnospira eligens (strain ATCC 27750 / DSM 3376 / VPI C15-48 / C15-B4) (Eubacterium eligens) protein is GTPase Der.